The following is a 688-amino-acid chain: Glycine--tRNA ligase beta subunit (688 aa).

This sequence belongs to the class-II aminoacyl-tRNA synthetase family. Tetramer of two alpha and two beta subunits.

It localises to the cytoplasm. The catalysed reaction is tRNA(Gly) + glycine + ATP = glycyl-tRNA(Gly) + AMP + diphosphate. The chain is Glycine--tRNA ligase beta subunit from Chromohalobacter salexigens (strain ATCC BAA-138 / DSM 3043 / CIP 106854 / NCIMB 13768 / 1H11).